The primary structure comprises 249 residues: Leucyl/phenylalanyl-tRNA--protein transferase (249 aa).

This sequence belongs to the L/F-transferase family.

Its subcellular location is the cytoplasm. It carries out the reaction N-terminal L-lysyl-[protein] + L-leucyl-tRNA(Leu) = N-terminal L-leucyl-L-lysyl-[protein] + tRNA(Leu) + H(+). It catalyses the reaction N-terminal L-arginyl-[protein] + L-leucyl-tRNA(Leu) = N-terminal L-leucyl-L-arginyl-[protein] + tRNA(Leu) + H(+). The catalysed reaction is L-phenylalanyl-tRNA(Phe) + an N-terminal L-alpha-aminoacyl-[protein] = an N-terminal L-phenylalanyl-L-alpha-aminoacyl-[protein] + tRNA(Phe). In terms of biological role, functions in the N-end rule pathway of protein degradation where it conjugates Leu, Phe and, less efficiently, Met from aminoacyl-tRNAs to the N-termini of proteins containing an N-terminal arginine or lysine. The polypeptide is Leucyl/phenylalanyl-tRNA--protein transferase (Cupriavidus metallidurans (strain ATCC 43123 / DSM 2839 / NBRC 102507 / CH34) (Ralstonia metallidurans)).